The sequence spans 375 residues: Phospho-N-acetylmuramoyl-pentapeptide-transferase (375 aa).

The next 10 helical transmembrane spans lie at 2 to 22 (IGLL…TPLF), 55 to 75 (AVII…LAVL), 82 to 102 (PTAS…VGFV), 120 to 140 (GKII…LNFP), 158 to 178 (IPWL…FVIW), 198 to 218 (GLAT…SLFQ), 237 to 257 (PMDL…FLWW), 264 to 284 (IFMG…FAIF), 289 to 309 (ILVA…IIQV), and 345 to 365 (WLLS…DWLI).

This sequence belongs to the glycosyltransferase 4 family. MraY subfamily. Requires Mg(2+) as cofactor.

The protein localises to the cell membrane. The enzyme catalyses UDP-N-acetyl-alpha-D-muramoyl-L-alanyl-gamma-D-glutamyl-meso-2,6-diaminopimeloyl-D-alanyl-D-alanine + di-trans,octa-cis-undecaprenyl phosphate = di-trans,octa-cis-undecaprenyl diphospho-N-acetyl-alpha-D-muramoyl-L-alanyl-D-glutamyl-meso-2,6-diaminopimeloyl-D-alanyl-D-alanine + UMP. It participates in cell wall biogenesis; peptidoglycan biosynthesis. Its function is as follows. Catalyzes the initial step of the lipid cycle reactions in the biosynthesis of the cell wall peptidoglycan: transfers peptidoglycan precursor phospho-MurNAc-pentapeptide from UDP-MurNAc-pentapeptide onto the lipid carrier undecaprenyl phosphate, yielding undecaprenyl-pyrophosphoryl-MurNAc-pentapeptide, known as lipid I. This Micrococcus luteus (strain ATCC 4698 / DSM 20030 / JCM 1464 / CCM 169 / CCUG 5858 / IAM 1056 / NBRC 3333 / NCIMB 9278 / NCTC 2665 / VKM Ac-2230) (Micrococcus lysodeikticus) protein is Phospho-N-acetylmuramoyl-pentapeptide-transferase.